The sequence spans 513 residues: Steroid (22S)-hydroxylase (513 aa).

A helical transmembrane segment spans residues 8–28; the sequence is TLLPLLLLPSLLSLLLFLILL. A disordered region spans residues 252–277; that stretch reads DIKEEDQEEEEVKTEDEAEMSKSDHV. The segment covering 254–269 has biased composition (acidic residues); sequence KEEDQEEEEVKTEDEA. Cysteine 462 contributes to the heme binding site.

It belongs to the cytochrome P450 family. Requires heme as cofactor. In terms of tissue distribution, expressed in stems, leaves, shoots, and roots, with a higher expression in siliques and apical shoots.

Its subcellular location is the membrane. It catalyses the reaction a C27-steroid + reduced [NADPH--hemoprotein reductase] + O2 = a (22S)-22-hydroxy C27-steroid + oxidized [NADPH--hemoprotein reductase] + H2O + H(+). The enzyme catalyses a C28-steroid + reduced [NADPH--hemoprotein reductase] + O2 = a (22S)-22-hydroxy C28-steroid + oxidized [NADPH--hemoprotein reductase] + H2O + H(+). The catalysed reaction is a C29-steroid + reduced [NADPH--hemoprotein reductase] + O2 = a (22S)-22-hydroxy C29-steroid + oxidized [NADPH--hemoprotein reductase] + H2O + H(+). It carries out the reaction cholesterol + reduced [NADPH--hemoprotein reductase] + O2 = (22S)-22-hydroxycholesterol + oxidized [NADPH--hemoprotein reductase] + H2O + H(+). It catalyses the reaction cholestanol + reduced [NADPH--hemoprotein reductase] + O2 = (22S)-22-hydroxycholestanol + oxidized [NADPH--hemoprotein reductase] + H2O + H(+). The enzyme catalyses campestanol + reduced [NADPH--hemoprotein reductase] + O2 = 6-deoxycathasterone + oxidized [NADPH--hemoprotein reductase] + H2O + H(+). The catalysed reaction is campesterol + reduced [NADPH--hemoprotein reductase] + O2 = (22S)-22-hydroxycampesterol + oxidized [NADPH--hemoprotein reductase] + H2O + H(+). It carries out the reaction 6-oxocampestanol + reduced [NADPH--hemoprotein reductase] + O2 = cathasterone + oxidized [NADPH--hemoprotein reductase] + H2O + H(+). It catalyses the reaction sitosterol + reduced [NADPH--hemoprotein reductase] + O2 = (22S)-22-hydroxysitosterol + oxidized [NADPH--hemoprotein reductase] + H2O + H(+). It participates in plant hormone biosynthesis; brassinosteroid biosynthesis. Its function is as follows. Catalyzes the C22-alpha-hydroxylation step in brassinosteroids biosynthesis. Converts campesterol (CR) to (22S)-22-hydroxycampesterol (22-OHCR, 22-hydroxyCR), campestanol (CN) to 6-deoxycathasterone (6-deoxoCT), and 6-oxocampestanol (6-oxoCN) to cathasterone (CT). Can also use cholesterol and cholestanol as substrates. The polypeptide is Steroid (22S)-hydroxylase (Arabidopsis thaliana (Mouse-ear cress)).